A 209-amino-acid polypeptide reads, in one-letter code: Chaperone protein TorD (209 aa).

Belongs to the TorD/DmsD family. TorD subfamily.

The protein resides in the cytoplasm. Functionally, involved in the biogenesis of TorA. Acts on TorA before the insertion of the molybdenum cofactor and, as a result, probably favors a conformation of the apoenzyme that is competent for acquiring the cofactor. The polypeptide is Chaperone protein TorD (Shewanella sp. (strain MR-4)).